A 329-amino-acid chain; its full sequence is Biotin synthase (329 aa).

Positions 46 to 275 (YYGNKVKLNM…TKEIRISGGR (230 aa)) constitute a Radical SAM core domain. Residues C64, C68, and C71 each contribute to the [4Fe-4S] cluster site. C108, C140, C200, and R270 together coordinate [2Fe-2S] cluster.

This sequence belongs to the radical SAM superfamily. Biotin synthase family. In terms of assembly, homodimer. Requires [4Fe-4S] cluster as cofactor. It depends on [2Fe-2S] cluster as a cofactor.

It catalyses the reaction (4R,5S)-dethiobiotin + (sulfur carrier)-SH + 2 reduced [2Fe-2S]-[ferredoxin] + 2 S-adenosyl-L-methionine = (sulfur carrier)-H + biotin + 2 5'-deoxyadenosine + 2 L-methionine + 2 oxidized [2Fe-2S]-[ferredoxin]. Its pathway is cofactor biosynthesis; biotin biosynthesis; biotin from 7,8-diaminononanoate: step 2/2. In terms of biological role, catalyzes the conversion of dethiobiotin (DTB) to biotin by the insertion of a sulfur atom into dethiobiotin via a radical-based mechanism. This chain is Biotin synthase, found in Anoxybacillus flavithermus (strain DSM 21510 / WK1).